A 180-amino-acid chain; its full sequence is uncharacterized protein (180 aa).

The segment covering 114-136 has biased composition (basic and acidic residues); it reads DKISESDSLPDEYKEYVVKHDSD. The disordered stretch occupies residues 114–180; sequence DKISESDSLP…NFDNPDDNPK (67 aa). Residues 137 to 146 show a composition bias toward acidic residues; the sequence is NSDNDSDNSD. Positions 147–173 are enriched in low complexity; sequence NDSNNSDNDSNNSDSDSDNSNDPNNFD.

This is an uncharacterized protein from Acanthamoeba polyphaga (Amoeba).